A 565-amino-acid polypeptide reads, in one-letter code: Granule-bound starch synthase 1b, chloroplastic/amyloplastic (565 aa).

Residues Val1–Cys34 constitute a chloroplast transit peptide. An ADP-alpha-D-glucose-binding site is contributed by Lys52.

This sequence belongs to the glycosyltransferase 1 family. Bacterial/plant glycogen synthase subfamily.

The protein resides in the plastid. It is found in the chloroplast. It localises to the amyloplast. It carries out the reaction an NDP-alpha-D-glucose + [(1-&gt;4)-alpha-D-glucosyl](n) = [(1-&gt;4)-alpha-D-glucosyl](n+1) + a ribonucleoside 5'-diphosphate + H(+). The protein operates within glycan biosynthesis; starch biosynthesis. In terms of biological role, involved in the synthesis of amylose in endosperm. This Hordeum vulgare (Barley) protein is Granule-bound starch synthase 1b, chloroplastic/amyloplastic.